We begin with the raw amino-acid sequence, 251 residues long: Ribosomal RNA small subunit methyltransferase J (251 aa).

S-adenosyl-L-methionine-binding positions include 100–101 (RD), 116–117 (ER), and Asp170.

This sequence belongs to the methyltransferase superfamily. RsmJ family.

The protein resides in the cytoplasm. It carries out the reaction guanosine(1516) in 16S rRNA + S-adenosyl-L-methionine = N(2)-methylguanosine(1516) in 16S rRNA + S-adenosyl-L-homocysteine + H(+). Specifically methylates the guanosine in position 1516 of 16S rRNA. This Actinobacillus pleuropneumoniae serotype 5b (strain L20) protein is Ribosomal RNA small subunit methyltransferase J.